A 297-amino-acid polypeptide reads, in one-letter code: UDP-N-acetylenolpyruvoylglucosamine reductase (297 aa).

The region spanning 22–195 is the FAD-binding PCMH-type domain; that stretch reads RVGGPAQYYA…LAGRFRLHRA (174 aa). Arginine 169 is a catalytic residue. The active-site Proton donor is serine 223. Glutamate 293 is an active-site residue.

Belongs to the MurB family. It depends on FAD as a cofactor.

It is found in the cytoplasm. It catalyses the reaction UDP-N-acetyl-alpha-D-muramate + NADP(+) = UDP-N-acetyl-3-O-(1-carboxyvinyl)-alpha-D-glucosamine + NADPH + H(+). It functions in the pathway cell wall biogenesis; peptidoglycan biosynthesis. In terms of biological role, cell wall formation. In Chloroflexus aggregans (strain MD-66 / DSM 9485), this protein is UDP-N-acetylenolpyruvoylglucosamine reductase.